A 704-amino-acid chain; its full sequence is Elongation factor G (704 aa).

The tr-type G domain occupies 8–291 (DKVRNIGIMA…AVVEYLASPV (284 aa)). Residues 17–24 (AHIDAGKT), 90–94 (DTPGH), and 144–147 (NKMD) contribute to the GTP site.

The protein belongs to the TRAFAC class translation factor GTPase superfamily. Classic translation factor GTPase family. EF-G/EF-2 subfamily.

It is found in the cytoplasm. Functionally, catalyzes the GTP-dependent ribosomal translocation step during translation elongation. During this step, the ribosome changes from the pre-translocational (PRE) to the post-translocational (POST) state as the newly formed A-site-bound peptidyl-tRNA and P-site-bound deacylated tRNA move to the P and E sites, respectively. Catalyzes the coordinated movement of the two tRNA molecules, the mRNA and conformational changes in the ribosome. The chain is Elongation factor G from Chlorobium phaeobacteroides (strain DSM 266 / SMG 266 / 2430).